Consider the following 147-residue polypeptide: Hemoglobin subunit delta (147 aa).

In terms of domain architecture, Globin spans 3-147 (HLTADEKAAV…VAAALAHKYH (145 aa)). The heme b site is built by His64 and His93.

Belongs to the globin family. In terms of assembly, heterotetramer of two delta chains and two alpha chains. As to expression, red blood cells.

In Carlito syrichta (Philippine tarsier), this protein is Hemoglobin subunit delta (HBD).